The primary structure comprises 357 residues: MIIHISNSSSYIWLSVYFYKEPLSLKLLISIFELSSCILCGYILNLSIFVMLKIQLFHKNLMFLTVPLFAIWHELIIGKFITIAYRLKIVNPGFELGEHTVFWTNDPDKTLEVAGSSGLELLIFGGFLQWHTIYSIVFGILAVATERTIASVYIKDYESKERIYIPIILTIISQLLSISISLAIITQSIGPFLARLPFVICAPLSVLVFLFIKHTNQSLLKEICNPKRTRIFTVSQQCQVKENLRALRLGTRLVVVVIFYISICGFGIAALTFGLIPAGFGHLIENFLFLHPYPICLTAMFSIPQWRDQFKKSILPFLNRRLAKIEQVVTVRIEVNVQNSSSVETDIYFRQLTESWT.

7 helical membrane passes run 31–51 (IFELSSCILCGYILNLSIFVM), 61–81 (LMFLTVPLFAIWHELIIGKFI), 121–141 (LLIFGGFLQWHTIYSIVFGIL), 165–185 (IPIILTIISQLLSISISLAII), 192–212 (FLARLPFVICAPLSVLVFLFI), 253–273 (LVVVVIFYISICGFGIAALTF), and 283–303 (LIENFLFLHPYPICLTAMFSI).

It belongs to the nematode receptor-like protein sre family.

It localises to the membrane. The protein is Serpentine receptor class epsilon-30 (sre-30) of Caenorhabditis elegans.